A 1460-amino-acid chain; its full sequence is CLIP-associating protein 1-A (1460 aa).

HEAT repeat units lie at residues 87–124 (TQLGTVLPSLMDRLGDAKDSVREQDQSLLIKIMEQASN) and 163–200 (LTLSKIVPHICNLLGDPNSQVRDAAINCLVEIYRHVGE). The tract at residues 237–293 (SDKNFDDEDSVDGNRPSSASSSASSKAPQTARRGVSLGTARRPGPSSAAAKTGGTAK) is disordered. The span at 279–293 (PGPSSAAAKTGGTAK) shows a compositional bias: low complexity. HEAT repeat units follow at residues 407–442 (HGAEAIMPTVFNLVPNSAKIMATSGIVAIRLIIRHT) and 443–479 (HVPRLIPIITSNCTSKSVAVRRRCYDFLDLLLQEWQT). Disordered stretches follow at residues 545–605 (SDSI…IDVN), 640–733 (IRTR…RFGI), and 778–800 (PYGMYSDDDANSDASSACSERSY). The segment covering 550–569 (SLPQSDRSSSSSQESLNRPL) has biased composition (low complexity). Over residues 571–597 (TKRSPTGSTVSRASSTTSKSTPGSLQR) the composition is skewed to polar residues. Over residues 645 to 659 (QSSGSTTSTASTPAD) the composition is skewed to low complexity. Composition is skewed to polar residues over residues 669–681 (VSQSQPGSRSNSP) and 715–724 (QGCSRETSPS). The span at 789-800 (SDASSACSERSY) shows a compositional bias: low complexity. The HEAT 5 repeat unit spans residues 942-979 (FIVDQTQTPNLKVKVAILKYIESLARQMDPTDFVNSSE). The tract at residues 1041 to 1084 (LKNSSNSSMGSPSNTIGRTPSRHSSSRASPLTSPTNCSHGGLSP) is disordered. Low complexity predominate over residues 1042 to 1054 (KNSSNSSMGSPSN). The span at 1066–1078 (SRASPLTSPTNCS) shows a compositional bias: polar residues. HEAT repeat units follow at residues 1272 to 1309 (LLLETLGDKDHAIRALALRVLREILRNQPARFKNYAEL) and 1390 to 1427 (GLLQGYDNTESSVRKASVFCLVAIYSVIGEELKPYLAQ).

Belongs to the CLASP family.

The protein localises to the cytoplasm. It localises to the cytoskeleton. It is found in the microtubule organizing center. The protein resides in the centrosome. Its subcellular location is the chromosome. The protein localises to the centromere. It localises to the kinetochore. It is found in the spindle. The protein resides in the golgi apparatus. Its subcellular location is the trans-Golgi network. Its function is as follows. Microtubule plus-end tracking protein that promotes the stabilization of dynamic microtubules during anaphase. Plays a crucial role in chromatin-induced microtubule formation. May also act at microtubule minus ends. May be involved in the nucleation of noncentrosomal microtubules originating from the trans-Golgi network (TGN). In Xenopus laevis (African clawed frog), this protein is CLIP-associating protein 1-A (clasp1-a).